The sequence spans 168 residues: uncharacterized protein (168 aa).

The 155-residue stretch at 14-168 folds into the N-acetyltransferase domain; sequence IDIPLLDAAS…EYKHWIYVTK (155 aa).

Belongs to the acetyltransferase family.

This is an uncharacterized protein from Bacillus subtilis (strain 168).